A 188-amino-acid chain; its full sequence is Elongation factor P (188 aa).

It belongs to the elongation factor P family.

It is found in the cytoplasm. Its pathway is protein biosynthesis; polypeptide chain elongation. Involved in peptide bond synthesis. Stimulates efficient translation and peptide-bond synthesis on native or reconstituted 70S ribosomes in vitro. Probably functions indirectly by altering the affinity of the ribosome for aminoacyl-tRNA, thus increasing their reactivity as acceptors for peptidyl transferase. The chain is Elongation factor P from Cellvibrio japonicus (strain Ueda107) (Pseudomonas fluorescens subsp. cellulosa).